Reading from the N-terminus, the 120-residue chain is Ribosome-binding factor A (120 aa).

Belongs to the RbfA family. In terms of assembly, monomer. Binds 30S ribosomal subunits, but not 50S ribosomal subunits or 70S ribosomes.

Its subcellular location is the cytoplasm. In terms of biological role, one of several proteins that assist in the late maturation steps of the functional core of the 30S ribosomal subunit. Associates with free 30S ribosomal subunits (but not with 30S subunits that are part of 70S ribosomes or polysomes). Required for efficient processing of 16S rRNA. May interact with the 5'-terminal helix region of 16S rRNA. This is Ribosome-binding factor A from Rickettsia felis (strain ATCC VR-1525 / URRWXCal2) (Rickettsia azadi).